The chain runs to 840 residues: Phosphatidylinositol-glycan-specific phospholipase D (840 aa).

Residues 1 to 23 form the signal peptide; that stretch reads MSAFRLWPGLLIMLGSLCHRGSP. N-linked (GlcNAc...) asparagine glycans are attached at residues N94, N271, N292, N307, and N321. FG-GAP repeat units follow at residues 367-428, 436-497, 499-559, 563-623, 633-693, 704-770, and 788-840; these read SPLA…GLPP, EAHR…GGMS, SPNI…LSDK, NVEA…SLGR, QSWF…GATR, LLLS…TLGD, and QYVL…LGSD. N-linked (GlcNAc...) asparagine glycosylation is found at N501, N568, N591, N604, and N659.

This sequence belongs to the GPLD1 family. As to quaternary structure, monomer.

The protein localises to the secreted. It carries out the reaction a 6-(alpha-D-glucosaminyl)-1-(1,2-diacyl-sn-glycero-3-phospho)-1D-myo-inositol + H2O = 6-(alpha-D-glucosaminyl)-1D-myo-inositol + a 1,2-diacyl-sn-glycero-3-phosphate + H(+). In terms of biological role, this protein hydrolyzes the inositol phosphate linkage in proteins anchored by phosphatidylinositol glycans (GPI-anchor) thus releasing these proteins from the membrane. This chain is Phosphatidylinositol-glycan-specific phospholipase D (GPLD1), found in Homo sapiens (Human).